The sequence spans 525 residues: GMP synthase [glutamine-hydrolyzing] (525 aa).

A Glutamine amidotransferase type-1 domain is found at 9-207 (RILILDFGSQ…VRDICQCEAL (199 aa)). Catalysis depends on Cys-86, which acts as the Nucleophile. Residues His-181 and Glu-183 contribute to the active site. A GMPS ATP-PPase domain is found at 208-400 (WTPAKIIDDA…LGLPYDMLYR (193 aa)). 235–241 (SGGVDSS) contributes to the ATP binding site.

In terms of assembly, homodimer.

The catalysed reaction is XMP + L-glutamine + ATP + H2O = GMP + L-glutamate + AMP + diphosphate + 2 H(+). It participates in purine metabolism; GMP biosynthesis; GMP from XMP (L-Gln route): step 1/1. Its function is as follows. Catalyzes the synthesis of GMP from XMP. This Salmonella typhi protein is GMP synthase [glutamine-hydrolyzing].